A 211-amino-acid chain; its full sequence is RNA chaperone ProQ (211 aa).

Residues 112–148 (ERRAVEKANNPKANKKRSVHHSGNKSENKKSAGKKFS) are disordered. Residues 124–134 (ANKKRSVHHSG) are compositionally biased toward basic residues.

The protein belongs to the ProQ family.

It is found in the cytoplasm. In terms of biological role, RNA chaperone with significant RNA binding, RNA strand exchange and RNA duplexing activities. The polypeptide is RNA chaperone ProQ (Histophilus somni (strain 2336) (Haemophilus somnus)).